The following is a 206-amino-acid chain: Pro-glucagon (206 aa).

An N-terminal signal peptide occupies residues 1-22; it reads MKMKSIYFIAGLLLMIVQGSWQ. Residues 27–57 form a disordered region; the sequence is DTEEKSRSFKASQSEPLDESRQLNEVKRHSQ. Residues 44–54 are compositionally biased toward basic and acidic residues; the sequence is DESRQLNEVKR. Residues 86 to 109 constitute a propeptide that is removed on maturation; sequence NGQQGQEDKENDKFPDQLSSNAIS. Arginine amide is present on arginine 147. Propeptides lie at residues 151–163 and 199–206; these read DFPE…EEMG and RDLLGEYQ.

The protein belongs to the glucagon family. Post-translationally, proglucagon is post-translationally processed in a tissue-specific manner in pancreatic A cells and intestinal L cells. In pancreatic A cells, the major bioactive hormone is glucagon cleaved by PCSK2/PC2. In the intestinal L cells PCSK1/PC1 liberates GLP-1 and GLP-2. GLP-1 is further N-terminally truncated by post-translational processing in the intestinal L cells resulting in GLP-1(7-37) GLP-1-(7-36)amide.

Its subcellular location is the secreted. Plays a key role in glucose metabolism and homeostasis. Regulates blood glucose by increasing gluconeogenesis and decreasing glycolysis. Functionally, potent stimulator of glucose-dependent insulin release. Plays important roles on gastric motility and the suppression of plasma glucagon levels. May be involved in the suppression of satiety and stimulation of glucose disposal in peripheral tissues, independent of the actions of insulin. Has growth-promoting activities on intestinal epithelium. May also regulate the hypothalamic pituitary axis (HPA) via effects on LH, TSH, CRH, oxytocin, and vasopressin secretion. Increases islet mass through stimulation of islet neogenesis and pancreatic beta cell proliferation. Its function is as follows. Stimulates intestinal growth and up-regulates villus height in the small intestine, concomitant with increased crypt cell proliferation and decreased enterocyte apoptosis. The gastrointestinal tract, from the stomach to the colon is the principal target for GLP-2 action. Plays a key role in nutrient homeostasis, enhancing nutrient assimilation through enhanced gastrointestinal function, as well as increasing nutrient disposal. Stimulates intestinal glucose transport and decreases mucosal permeability. This chain is Pro-glucagon (GCG), found in Gallus gallus (Chicken).